The sequence spans 664 residues: Threonine--tRNA ligase (664 aa).

The TGS domain occupies 1-64 (MSELLKITLP…TADAQLALVT (64 aa)). Residues 250 to 559 (DHRKLGNEMD…LIEHFAGRLP (310 aa)) form a catalytic region. Positions 355, 406, and 536 each coordinate Zn(2+).

It belongs to the class-II aminoacyl-tRNA synthetase family. In terms of assembly, homodimer. Zn(2+) serves as cofactor.

It is found in the cytoplasm. It catalyses the reaction tRNA(Thr) + L-threonine + ATP = L-threonyl-tRNA(Thr) + AMP + diphosphate + H(+). In terms of biological role, catalyzes the attachment of threonine to tRNA(Thr) in a two-step reaction: L-threonine is first activated by ATP to form Thr-AMP and then transferred to the acceptor end of tRNA(Thr). Also edits incorrectly charged L-seryl-tRNA(Thr). This Novosphingobium aromaticivorans (strain ATCC 700278 / DSM 12444 / CCUG 56034 / CIP 105152 / NBRC 16084 / F199) protein is Threonine--tRNA ligase.